The chain runs to 147 residues: Diuretic hormone 45 (147 aa).

A signal peptide spans 1 to 26; sequence MMWWAVWCAAMVAGSVFTAAAPPTDS. Positions 27 to 84 are excised as a propeptide; sequence IDLMQMDPSLADDESLGFAMQSLSGRYAAAPWLYLLADVSHDPQRMAEFSQSSGRARP. Position 131 is a valine amide (Val131). A propeptide spanning residues 135–147 is cleaved from the precursor; that stretch reads GAWGEPASYLYNN.

The protein belongs to the sauvagine/corticotropin-releasing factor/urotensin I family.

It is found in the secreted. Regulation of fluid secretion. The polypeptide is Diuretic hormone 45 (dh45) (Bombyx mori (Silk moth)).